Here is a 388-residue protein sequence, read N- to C-terminus: Pepsin A-4 (388 aa).

The N-terminal stretch at Met1–Cys15 is a signal peptide. Positions Ile16–Leu62 are cleaved as a propeptide — activation peptide. A Peptidase A1 domain is found at Tyr76–Ala385. Residue Asp94 is part of the active site. Cys107 and Cys112 form a disulfide bridge. The residue at position 130 (Ser130) is a Phosphoserine. Residues Cys268 and Cys272 are joined by a disulfide bond. The active site involves Asp277. A disulfide bond links Cys311 and Cys344.

The protein belongs to the peptidase A1 family.

The protein resides in the secreted. It carries out the reaction Preferential cleavage: hydrophobic, preferably aromatic, residues in P1 and P1' positions. Cleaves 1-Phe-|-Val-2, 4-Gln-|-His-5, 13-Glu-|-Ala-14, 14-Ala-|-Leu-15, 15-Leu-|-Tyr-16, 16-Tyr-|-Leu-17, 23-Gly-|-Phe-24, 24-Phe-|-Phe-25 and 25-Phe-|-Tyr-26 bonds in the B chain of insulin.. Shows particularly broad specificity; although bonds involving phenylalanine and leucine are preferred, many others are also cleaved to some extent. This Homo sapiens (Human) protein is Pepsin A-4 (PGA4).